The following is a 208-amino-acid chain: Uracil phosphoribosyltransferase (208 aa).

5-phospho-alpha-D-ribose 1-diphosphate is bound by residues Arg-78, Arg-103, and 130 to 138 (DPMLATGGS). Uracil-binding positions include Ile-193 and 198 to 200 (GDA). Asp-199 provides a ligand contact to 5-phospho-alpha-D-ribose 1-diphosphate.

Belongs to the UPRTase family. Requires Mg(2+) as cofactor.

It catalyses the reaction UMP + diphosphate = 5-phospho-alpha-D-ribose 1-diphosphate + uracil. Its pathway is pyrimidine metabolism; UMP biosynthesis via salvage pathway; UMP from uracil: step 1/1. Its activity is regulated as follows. Allosterically activated by GTP. Catalyzes the conversion of uracil and 5-phospho-alpha-D-ribose 1-diphosphate (PRPP) to UMP and diphosphate. This is Uracil phosphoribosyltransferase from Shewanella denitrificans (strain OS217 / ATCC BAA-1090 / DSM 15013).